A 305-amino-acid polypeptide reads, in one-letter code: MQVHDNHRRPLVSLRISVTGRCNVSCIYCHRDGILRSDEEMSPEDIENICRVASDLGVKKIRLSGGEPLIRDDIVEIVEKINSIGFRDISITTNGTLLEDLSVPLRDAGLDRVNVSFDTLKPETYRFITRKDYLERVKAGIEGAVMAGLDPVKINMVILRGVNHHEIWDMFEFCRQQGAVLQIIELLKTDSCPDNGVERYHCDITPIEAELAEMADRIMTRKFMQDRKKYFIGDGEVEVVRPMDNTRFCANCTRLRVTPDGKLKPCLLRNDNLVDTKEALSSGDLEGLRELFLEAIRRRSPYYQS.

The 223-residue stretch at 6 to 228 folds into the Radical SAM core domain; sequence NHRRPLVSLR…MTRKFMQDRK (223 aa). Arginine 15 lines the GTP pocket. Residues cysteine 22 and cysteine 26 each coordinate [4Fe-4S] cluster. An S-adenosyl-L-methionine-binding site is contributed by tyrosine 28. Cysteine 29 is a binding site for [4Fe-4S] cluster. Residue arginine 62 participates in GTP binding. Position 66 (glycine 66) interacts with S-adenosyl-L-methionine. Residue threonine 92 coordinates GTP. Serine 116 provides a ligand contact to S-adenosyl-L-methionine. Residue lysine 153 coordinates GTP. Positions 249 and 252 each coordinate [4Fe-4S] cluster. GTP is bound at residue 254–256; sequence RLR. A [4Fe-4S] cluster-binding site is contributed by cysteine 266.

This sequence belongs to the radical SAM superfamily. MoaA family. [4Fe-4S] cluster serves as cofactor.

The catalysed reaction is GTP + AH2 + S-adenosyl-L-methionine = (8S)-3',8-cyclo-7,8-dihydroguanosine 5'-triphosphate + 5'-deoxyadenosine + L-methionine + A + H(+). Its pathway is cofactor biosynthesis; molybdopterin biosynthesis. Its function is as follows. Catalyzes the cyclization of GTP to (8S)-3',8-cyclo-7,8-dihydroguanosine 5'-triphosphate. The chain is Probable GTP 3',8-cyclase from Methanothermobacter marburgensis (strain ATCC BAA-927 / DSM 2133 / JCM 14651 / NBRC 100331 / OCM 82 / Marburg) (Methanobacterium thermoautotrophicum).